The sequence spans 68 residues: P21 prophage-derived head-stabilizing protein (68 aa).

Belongs to the lambda phage gpW family.

The protein is P21 prophage-derived head-stabilizing protein of Escherichia coli O6:H1 (strain CFT073 / ATCC 700928 / UPEC).